The primary structure comprises 485 residues: Aspartyl/glutamyl-tRNA(Asn/Gln) amidotransferase subunit B (485 aa).

This sequence belongs to the GatB/GatE family. GatB subfamily. In terms of assembly, heterotrimer of A, B and C subunits.

It carries out the reaction L-glutamyl-tRNA(Gln) + L-glutamine + ATP + H2O = L-glutaminyl-tRNA(Gln) + L-glutamate + ADP + phosphate + H(+). The enzyme catalyses L-aspartyl-tRNA(Asn) + L-glutamine + ATP + H2O = L-asparaginyl-tRNA(Asn) + L-glutamate + ADP + phosphate + 2 H(+). Allows the formation of correctly charged Asn-tRNA(Asn) or Gln-tRNA(Gln) through the transamidation of misacylated Asp-tRNA(Asn) or Glu-tRNA(Gln) in organisms which lack either or both of asparaginyl-tRNA or glutaminyl-tRNA synthetases. The reaction takes place in the presence of glutamine and ATP through an activated phospho-Asp-tRNA(Asn) or phospho-Glu-tRNA(Gln). This is Aspartyl/glutamyl-tRNA(Asn/Gln) amidotransferase subunit B from Borrelia hermsii (strain HS1 / DAH).